Consider the following 282-residue polypeptide: Putative hydrolase Bcep18194_B0137 (282 aa).

Mg(2+) contacts are provided by glutamate 124, glutamate 126, and aspartate 155.

The protein belongs to the FAH family. Mg(2+) serves as cofactor.

This chain is Putative hydrolase Bcep18194_B0137, found in Burkholderia lata (strain ATCC 17760 / DSM 23089 / LMG 22485 / NCIMB 9086 / R18194 / 383).